The chain runs to 548 residues: CTP synthase (548 aa).

The interval 1 to 270 (MTKYVFVTGG…DNIVCEALGL (270 aa)) is amidoligase domain. Ser13 provides a ligand contact to CTP. Ser13 contributes to the UTP binding site. ATP-binding positions include 14–19 (SLGKGI) and Asp71. The Mg(2+) site is built by Asp71 and Glu144. Residues 151-153 (DIE), 191-196 (KTKPTQ), and Lys227 contribute to the CTP site. Residues 191–196 (KTKPTQ) and Lys227 contribute to the UTP site. The region spanning 295 to 545 (TIGMVGKYVD…IEAAIANHAR (251 aa)) is the Glutamine amidotransferase type-1 domain. Gly356 is a binding site for L-glutamine. Cys383 serves as the catalytic Nucleophile; for glutamine hydrolysis. Residues 384 to 387 (LGMQ), Glu407, and Arg473 each bind L-glutamine. Catalysis depends on residues His518 and Glu520.

This sequence belongs to the CTP synthase family. Homotetramer.

It carries out the reaction UTP + L-glutamine + ATP + H2O = CTP + L-glutamate + ADP + phosphate + 2 H(+). The catalysed reaction is L-glutamine + H2O = L-glutamate + NH4(+). The enzyme catalyses UTP + NH4(+) + ATP = CTP + ADP + phosphate + 2 H(+). It functions in the pathway pyrimidine metabolism; CTP biosynthesis via de novo pathway; CTP from UDP: step 2/2. Allosterically activated by GTP, when glutamine is the substrate; GTP has no effect on the reaction when ammonia is the substrate. The allosteric effector GTP functions by stabilizing the protein conformation that binds the tetrahedral intermediate(s) formed during glutamine hydrolysis. Inhibited by the product CTP, via allosteric rather than competitive inhibition. In terms of biological role, catalyzes the ATP-dependent amination of UTP to CTP with either L-glutamine or ammonia as the source of nitrogen. Regulates intracellular CTP levels through interactions with the four ribonucleotide triphosphates. In Bordetella petrii (strain ATCC BAA-461 / DSM 12804 / CCUG 43448), this protein is CTP synthase.